The sequence spans 275 residues: NH(3)-dependent NAD(+) synthetase (275 aa).

46-53 is a binding site for ATP; it reads GISGGQDS. Asp-52 contacts Mg(2+). Residue Arg-140 coordinates deamido-NAD(+). Position 160 (Thr-160) interacts with ATP. Glu-165 is a Mg(2+) binding site. Deamido-NAD(+) is bound by residues Lys-173 and Asp-180. Positions 189 and 211 each coordinate ATP. 260–261 lines the deamido-NAD(+) pocket; sequence HK.

Belongs to the NAD synthetase family. As to quaternary structure, homodimer.

The enzyme catalyses deamido-NAD(+) + NH4(+) + ATP = AMP + diphosphate + NAD(+) + H(+). It functions in the pathway cofactor biosynthesis; NAD(+) biosynthesis; NAD(+) from deamido-NAD(+) (ammonia route): step 1/1. Its function is as follows. Catalyzes the ATP-dependent amidation of deamido-NAD to form NAD. Uses ammonia as a nitrogen source. In Salmonella dublin (strain CT_02021853), this protein is NH(3)-dependent NAD(+) synthetase.